Reading from the N-terminus, the 617-residue chain is V-type proton ATPase catalytic subunit A (617 aa).

Thr136 is subject to Phosphothreonine. 250-257 lines the ATP pocket; it reads GAFGCGKT. Residue Ser384 is modified to Phosphoserine; by AMPK.

It belongs to the ATPase alpha/beta chains family. In terms of assembly, V-ATPase is a heteromultimeric enzyme made up of two complexes: the ATP-hydrolytic V1 complex and the proton translocation V0 complex. The V1 complex consists of three catalytic AB heterodimers that form a heterohexamer, three peripheral stalks each consisting of EG heterodimers, one central rotor including subunits D and F, and the regulatory subunits C and H. The proton translocation complex V0 consists of the proton transport subunit a, a ring of proteolipid subunits c9c'', rotary subunit d, subunits e and f, and the accessory subunits ATP6AP1/Ac45 and ATP6AP2/PRR. Interacts with the V0 complex V-ATPase subunit a4 ATP6V0A4. Interacts with WFS1. Interacts with alpha-crystallin B chain/CRYAB and with MTOR, forming a ternary complex. Phosphorylation at Ser-384 by AMPK down-regulates its enzyme activity. As to expression, expressed in brain (at protein level).

Its subcellular location is the cytoplasm. It localises to the cytosol. It is found in the cytoplasmic vesicle. The protein localises to the secretory vesicle. The protein resides in the clathrin-coated vesicle membrane. Its subcellular location is the lysosome. The catalysed reaction is ATP + H2O + 4 H(+)(in) = ADP + phosphate + 5 H(+)(out). ATP hydrolysis occurs at the interface between the nucleotide-binding domains of subunits A and B. ATP hydrolysis triggers a conformational change in the subunits D and F, which induces a shift of subunit d. The c-ring is subsequently rotated and results in a continuous proton translocation across the membrane. The V-ATPase is inhibited by bafilomycin A. In terms of biological role, catalytic subunit of the V1 complex of vacuolar(H+)-ATPase (V-ATPase), a multisubunit enzyme composed of a peripheral complex (V1) that hydrolyzes ATP and a membrane integral complex (V0) that translocates protons. V-ATPase is responsible for acidifying and maintaining the pH of intracellular compartments and in some cell types, is targeted to the plasma membrane, where it is responsible for acidifying the extracellular environment. In aerobic conditions, involved in intracellular iron homeostasis, thus triggering the activity of Fe(2+) prolyl hydroxylase (PHD) enzymes, and leading to HIF1A hydroxylation and subsequent proteasomal degradation. May play a role in neurite development and synaptic connectivity. This is V-type proton ATPase catalytic subunit A (ATP6V1A) from Bos taurus (Bovine).